A 140-amino-acid polypeptide reads, in one-letter code: Holo-[acyl-carrier-protein] synthase (140 aa).

Residues Asp-8 and Glu-57 each coordinate Mg(2+).

Belongs to the P-Pant transferase superfamily. AcpS family. It depends on Mg(2+) as a cofactor.

It is found in the cytoplasm. It catalyses the reaction apo-[ACP] + CoA = holo-[ACP] + adenosine 3',5'-bisphosphate + H(+). Transfers the 4'-phosphopantetheine moiety from coenzyme A to a Ser of acyl-carrier-protein. In Beijerinckia indica subsp. indica (strain ATCC 9039 / DSM 1715 / NCIMB 8712), this protein is Holo-[acyl-carrier-protein] synthase.